The primary structure comprises 243 residues: Benzil reductase ((S)-benzoin forming) (243 aa).

Residues isoleucine 6, asparagine 80, tyrosine 147, lysine 151, and threonine 184 each coordinate NADP(+). Residue tyrosine 147 is the Proton acceptor of the active site.

The protein belongs to the short-chain dehydrogenases/reductases (SDR) family.

It is found in the cytoplasm. It catalyses the reaction (S)-benzoin + NADP(+) = benzil + NADPH + H(+). Functionally, reduces benzil stereospecifically to (S)-benzoin. This is Benzil reductase ((S)-benzoin forming) (yueD) from Bacillus subtilis (strain 168).